A 600-amino-acid polypeptide reads, in one-letter code: NADH-quinone oxidoreductase subunit C/D (600 aa).

Positions M1–Q190 are NADH dehydrogenase I subunit C. Positions D214–R600 are NADH dehydrogenase I subunit D.

The protein in the N-terminal section; belongs to the complex I 30 kDa subunit family. It in the C-terminal section; belongs to the complex I 49 kDa subunit family. As to quaternary structure, NDH-1 is composed of 13 different subunits. Subunits NuoB, CD, E, F, and G constitute the peripheral sector of the complex.

The protein resides in the cell inner membrane. The catalysed reaction is a quinone + NADH + 5 H(+)(in) = a quinol + NAD(+) + 4 H(+)(out). In terms of biological role, NDH-1 shuttles electrons from NADH, via FMN and iron-sulfur (Fe-S) centers, to quinones in the respiratory chain. The immediate electron acceptor for the enzyme in this species is believed to be ubiquinone. Couples the redox reaction to proton translocation (for every two electrons transferred, four hydrogen ions are translocated across the cytoplasmic membrane), and thus conserves the redox energy in a proton gradient. The polypeptide is NADH-quinone oxidoreductase subunit C/D (Citrobacter koseri (strain ATCC BAA-895 / CDC 4225-83 / SGSC4696)).